The sequence spans 227 residues: Mitochondrial inner membrane protease ATP23 (227 aa).

His129 is a binding site for a divalent metal cation. Glu130 is a catalytic residue. A divalent metal cation is bound at residue His133.

The protein belongs to the peptidase M76 family.

It is found in the mitochondrion inner membrane. In terms of biological role, has a dual role in the assembly of mitochondrial ATPase. Acts as a protease that removes N-terminal residues of mitochondrial ATPase CF(0) subunit 6 at the intermembrane space side. Also involved in the correct assembly of the membrane-embedded ATPase CF(0) particle, probably mediating association of subunit 6 with the subunit 9 ring. In Cryptococcus neoformans var. neoformans serotype D (strain B-3501A) (Filobasidiella neoformans), this protein is Mitochondrial inner membrane protease ATP23 (ATP23).